The following is a 262-amino-acid chain: Acyl-[acyl-carrier-protein]--UDP-N-acetylglucosamine O-acyltransferase (262 aa).

This sequence belongs to the transferase hexapeptide repeat family. LpxA subfamily. Homotrimer.

The protein resides in the cytoplasm. The catalysed reaction is a (3R)-hydroxyacyl-[ACP] + UDP-N-acetyl-alpha-D-glucosamine = a UDP-3-O-[(3R)-3-hydroxyacyl]-N-acetyl-alpha-D-glucosamine + holo-[ACP]. It participates in glycolipid biosynthesis; lipid IV(A) biosynthesis; lipid IV(A) from (3R)-3-hydroxytetradecanoyl-[acyl-carrier-protein] and UDP-N-acetyl-alpha-D-glucosamine: step 1/6. Involved in the biosynthesis of lipid A, a phosphorylated glycolipid that anchors the lipopolysaccharide to the outer membrane of the cell. This chain is Acyl-[acyl-carrier-protein]--UDP-N-acetylglucosamine O-acyltransferase, found in Verminephrobacter eiseniae (strain EF01-2).